The sequence spans 531 residues: Cytochrome c oxidase subunit 1 (531 aa).

A helical transmembrane segment spans residues 18-38 (ILYLIYGMVSAMVATGMSVII). Ca(2+) contacts are provided by Glu-41 and Gly-46. 6 helical membrane-spanning segments follow: residues 59-79 (VLVT…ILIG), 103-123 (ISFW…LIET), 149-169 (AIFA…NFIV), 185-205 (PLFV…LPVL), 237-257 (LFYF…FGII), and 269-289 (IFGQ…GFLV). His-64 lines the Fe(II)-heme a pocket. His-243 is a Cu cation binding site. The 1'-histidyl-3'-tyrosine (His-Tyr) cross-link spans 243–247 (HPEVY). Tyr-247 is an O2 binding site. Residues His-292 and His-293 each coordinate Cu cation. 2 helical membrane-spanning segments follow: residues 312 to 332 (MVIA…LYGG) and 340 to 360 (MLFA…GVML). Mg(2+)-binding residues include His-370 and Asp-371. His-378 serves as a coordination point for heme a3. His-380 provides a ligand contact to Fe(II)-heme a. 2 consecutive transmembrane segments (helical) span residues 385-405 (MGAL…MFGL) and 414-434 (VHYW…HFLG). Pro-443 is a Ca(2+) binding site. Residues 458–478 (WGSIMSVISVLIGLYSVLVQL) traverse the membrane as a helical segment.

This sequence belongs to the heme-copper respiratory oxidase family. Component of the cytochrome c oxidase (complex IV, CIV), a multisubunit enzyme composed of a catalytic core of 3 subunits and several supernumerary subunits. The complex exists as a monomer or a dimer and forms supercomplexes (SCs) in the inner mitochondrial membrane with ubiquinol-cytochrome c oxidoreductase (cytochrome b-c1 complex, complex III, CIII). The cofactor is heme. Cu cation is required as a cofactor.

It is found in the mitochondrion inner membrane. It catalyses the reaction 4 Fe(II)-[cytochrome c] + O2 + 8 H(+)(in) = 4 Fe(III)-[cytochrome c] + 2 H2O + 4 H(+)(out). It functions in the pathway energy metabolism; oxidative phosphorylation. Component of the cytochrome c oxidase, the last enzyme in the mitochondrial electron transport chain which drives oxidative phosphorylation. The respiratory chain contains 3 multisubunit complexes succinate dehydrogenase (complex II, CII), ubiquinol-cytochrome c oxidoreductase (cytochrome b-c1 complex, complex III, CIII) and cytochrome c oxidase (complex IV, CIV), that cooperate to transfer electrons derived from NADH and succinate to molecular oxygen, creating an electrochemical gradient over the inner membrane that drives transmembrane transport and the ATP synthase. Cytochrome c oxidase is the component of the respiratory chain that catalyzes the reduction of oxygen to water. Electrons originating from reduced cytochrome c in the intermembrane space (IMS) are transferred via the dinuclear copper A center (CU(A)) of subunit 2 and heme A of subunit 1 to the active site in subunit 1, a binuclear center (BNC) formed by heme A3 and copper B (CU(B)). The BNC reduces molecular oxygen to 2 water molecules using 4 electrons from cytochrome c in the IMS and 4 protons from the mitochondrial matrix. This chain is Cytochrome c oxidase subunit 1 (COX1), found in Candida albicans (strain SC5314 / ATCC MYA-2876) (Yeast).